A 202-amino-acid chain; its full sequence is Urease accessory protein UreG (202 aa).

13 to 20 (GPVGAGKT) contributes to the GTP binding site.

This sequence belongs to the SIMIBI class G3E GTPase family. UreG subfamily. In terms of assembly, homodimer. UreD, UreF and UreG form a complex that acts as a GTP-hydrolysis-dependent molecular chaperone, activating the urease apoprotein by helping to assemble the nickel containing metallocenter of UreC. The UreE protein probably delivers the nickel.

It localises to the cytoplasm. Its function is as follows. Facilitates the functional incorporation of the urease nickel metallocenter. This process requires GTP hydrolysis, probably effectuated by UreG. This Dinoroseobacter shibae (strain DSM 16493 / NCIMB 14021 / DFL 12) protein is Urease accessory protein UreG.